Consider the following 315-residue polypeptide: Lipoyl synthase (315 aa).

[4Fe-4S] cluster-binding residues include Cys62, Cys67, Cys73, Cys88, Cys92, Cys95, and Ser302. The Radical SAM core domain maps to 74-292 (FNHGTATFMI…KIALKLGFIR (219 aa)).

Belongs to the radical SAM superfamily. Lipoyl synthase family. The cofactor is [4Fe-4S] cluster.

It is found in the cytoplasm. It carries out the reaction [[Fe-S] cluster scaffold protein carrying a second [4Fe-4S](2+) cluster] + N(6)-octanoyl-L-lysyl-[protein] + 2 oxidized [2Fe-2S]-[ferredoxin] + 2 S-adenosyl-L-methionine + 4 H(+) = [[Fe-S] cluster scaffold protein] + N(6)-[(R)-dihydrolipoyl]-L-lysyl-[protein] + 4 Fe(3+) + 2 hydrogen sulfide + 2 5'-deoxyadenosine + 2 L-methionine + 2 reduced [2Fe-2S]-[ferredoxin]. It functions in the pathway protein modification; protein lipoylation via endogenous pathway; protein N(6)-(lipoyl)lysine from octanoyl-[acyl-carrier-protein]: step 2/2. In terms of biological role, catalyzes the radical-mediated insertion of two sulfur atoms into the C-6 and C-8 positions of the octanoyl moiety bound to the lipoyl domains of lipoate-dependent enzymes, thereby converting the octanoylated domains into lipoylated derivatives. This is Lipoyl synthase from Vesicomyosocius okutanii subsp. Calyptogena okutanii (strain HA).